The following is a 56-amino-acid chain: Large ribosomal subunit protein bL33 (56 aa).

Belongs to the bacterial ribosomal protein bL33 family.

In Helicobacter hepaticus (strain ATCC 51449 / 3B1), this protein is Large ribosomal subunit protein bL33.